Consider the following 251-residue polypeptide: uncharacterized protein (251 aa).

An HTH deoR-type domain is found at 3–58 (TPERHQLIIDQIEKHDVVKIQELINLTNASESTIRRDLSTLEERGFLKRVHGGAAK). A DNA-binding region (H-T-H motif) is located at residues 20–39 (VKIQELINLTNASESTIRRD).

This is an uncharacterized protein from Bacillus subtilis (strain 168).